A 565-amino-acid polypeptide reads, in one-letter code: Arginine--tRNA ligase (565 aa).

The 'HIGH' region signature appears at 126–136; sequence ANPTGPLHIGH.

Belongs to the class-I aminoacyl-tRNA synthetase family. As to quaternary structure, monomer.

The protein resides in the cytoplasm. It catalyses the reaction tRNA(Arg) + L-arginine + ATP = L-arginyl-tRNA(Arg) + AMP + diphosphate. In Wolbachia sp. subsp. Brugia malayi (strain TRS), this protein is Arginine--tRNA ligase.